Consider the following 308-residue polypeptide: Glutaminase (308 aa).

Residues serine 66, asparagine 117, glutamate 161, asparagine 168, tyrosine 192, tyrosine 244, and valine 262 each contribute to the substrate site.

Belongs to the glutaminase family. In terms of assembly, homotetramer.

The catalysed reaction is L-glutamine + H2O = L-glutamate + NH4(+). The sequence is that of Glutaminase from Yersinia pestis bv. Antiqua (strain Nepal516).